The following is a 444-amino-acid chain: Homogentisate 1,2-dioxygenase (444 aa).

His-298 acts as the Proton acceptor in catalysis. Residues His-341 and Glu-347 each contribute to the Fe cation site. The homogentisate site is built by Tyr-356 and His-377. Residue His-377 coordinates Fe cation.

It belongs to the homogentisate dioxygenase family. Hexamer; dimer of trimers. Fe cation is required as a cofactor.

The catalysed reaction is homogentisate + O2 = 4-maleylacetoacetate + H(+). Its pathway is amino-acid degradation; L-phenylalanine degradation; acetoacetate and fumarate from L-phenylalanine: step 4/6. Involved in the catabolism of homogentisate (2,5-dihydroxyphenylacetate or 2,5-OH-PhAc), a central intermediate in the degradation of phenylalanine and tyrosine. Catalyzes the oxidative ring cleavage of the aromatic ring of homogentisate to yield maleylacetoacetate. In Burkholderia lata (strain ATCC 17760 / DSM 23089 / LMG 22485 / NCIMB 9086 / R18194 / 383), this protein is Homogentisate 1,2-dioxygenase.